We begin with the raw amino-acid sequence, 104 residues long: Succinate dehydrogenase assembly factor 4, mitochondrial (104 aa).

The N-terminal 30 residues, 1 to 30, are a transit peptide targeting the mitochondrion; the sequence is MVSTTLSVSRMTFVWRAARPSLLNHSLRKM. A disordered region spans residues 29–104; the sequence is KMSYQEGKPE…WERKGRCIDF (76 aa). 2 stretches are compositionally biased toward basic and acidic residues: residues 63 to 83 and 91 to 104; these read EREPLQKFPDDVNPVTKEKGG and RYGDWERKGRCIDF.

The protein belongs to the SDHAF4 family. In terms of assembly, interacts with Sdha in its FAD-bound form.

It is found in the mitochondrion matrix. Functionally, plays an essential role in the assembly of succinate dehydrogenase (SDH), an enzyme complex (also referred to as respiratory complex II) that is a component of both the tricarboxylic acid (TCA) cycle and the mitochondrial electron transport chain, and which couples the oxidation of succinate to fumarate with the reduction of ubiquinone (coenzyme Q) to ubiquinol. Binds to the flavoprotein subunit Sdha in its FAD-bound form, blocking the generation of excess reactive oxygen species (ROS) and facilitating its assembly with the iron-sulfur protein subunit Sdhb into the SDH catalytic dimer. This Mus musculus (Mouse) protein is Succinate dehydrogenase assembly factor 4, mitochondrial.